The primary structure comprises 211 residues: Cytidylate kinase (211 aa).

9–17 (GPAAAGKGT) provides a ligand contact to ATP.

The protein belongs to the cytidylate kinase family. Type 1 subfamily.

Its subcellular location is the cytoplasm. The enzyme catalyses CMP + ATP = CDP + ADP. It catalyses the reaction dCMP + ATP = dCDP + ADP. The protein is Cytidylate kinase of Paramagnetospirillum magneticum (strain ATCC 700264 / AMB-1) (Magnetospirillum magneticum).